The chain runs to 49 residues: Light-harvesting protein B-875 beta chain (49 aa).

Residues 2-27 (ADKSDLGYTGLTDEQAQELHSVYMSG) lie on the Cytoplasmic side of the membrane. A bacteriochlorophyll is bound by residues His21 and His39. Residues 28 to 45 (LWLFSAVAIVAHLAVYIW) form a helical; Signal-anchor for type II membrane protein membrane-spanning segment. Residues 46 to 49 (RPWF) lie on the Periplasmic side of the membrane.

Belongs to the antenna complex beta subunit family. The core complex is formed by different alpha and beta chains, binding bacteriochlorophyll molecules, and arranged most probably in tetrameric structures disposed around the reaction center. The non-pigmented gamma chains may constitute additional components.

It is found in the cell inner membrane. Functionally, antenna complexes are light-harvesting systems, which transfer the excitation energy to the reaction centers. In Cereibacter sphaeroides (strain ATCC 17023 / DSM 158 / JCM 6121 / CCUG 31486 / LMG 2827 / NBRC 12203 / NCIMB 8253 / ATH 2.4.1.) (Rhodobacter sphaeroides), this protein is Light-harvesting protein B-875 beta chain (pufB).